The chain runs to 174 residues: NADH-quinone oxidoreductase subunit B 2 (174 aa).

[4Fe-4S] cluster is bound by residues Cys-53, Cys-54, Cys-118, and Cys-148.

Belongs to the complex I 20 kDa subunit family. In terms of assembly, NDH-1 is composed of 14 different subunits. Subunits NuoB, C, D, E, F, and G constitute the peripheral sector of the complex. The cofactor is [4Fe-4S] cluster.

The protein resides in the cell inner membrane. The enzyme catalyses a quinone + NADH + 5 H(+)(in) = a quinol + NAD(+) + 4 H(+)(out). Functionally, NDH-1 shuttles electrons from NADH, via FMN and iron-sulfur (Fe-S) centers, to quinones in the respiratory chain. Couples the redox reaction to proton translocation (for every two electrons transferred, four hydrogen ions are translocated across the cytoplasmic membrane), and thus conserves the redox energy in a proton gradient. The sequence is that of NADH-quinone oxidoreductase subunit B 2 from Cereibacter sphaeroides (strain ATCC 17025 / ATH 2.4.3) (Rhodobacter sphaeroides).